A 327-amino-acid chain; its full sequence is 2-methoxy-6-polyprenyl-1,4-benzoquinol methylase, mitochondrial (327 aa).

A mitochondrion-targeting transit peptide spans 1–49 (MAAPRCCVLWRVCGRGWWRATGHCRLPGCHRSWPWATLGTRSLSQEKRA). S-adenosyl-L-methionine contacts are provided by residues Thr117, Asp171, and 199–200 (DA).

It belongs to the class I-like SAM-binding methyltransferase superfamily. MenG/UbiE family. As to quaternary structure, component of a multi-subunit COQ enzyme complex, composed of at least COQ3, COQ4, COQ5, COQ6, COQ7 and COQ9. Interacts with PYURF; the interaction is direct, stabilizes COQ5 protein and associates PYURF with COQ enzyme complex.

It localises to the mitochondrion inner membrane. It carries out the reaction 2-methoxy-6-(all-trans-decaprenyl)benzene-1,4-diol + S-adenosyl-L-methionine = 5-methoxy-2-methyl-3-(all-trans-decaprenyl)benzene-1,4-diol + S-adenosyl-L-homocysteine + H(+). It participates in cofactor biosynthesis; ubiquinone biosynthesis. Its function is as follows. Methyltransferase required for the conversion of 2-decaprenyl-6-methoxy-1,4-benzoquinol (DDMQH2) to 2-decaprenyl-3-methyl-6-methoxy-1,4-benzoquinol (DMQH2). The sequence is that of 2-methoxy-6-polyprenyl-1,4-benzoquinol methylase, mitochondrial from Mus musculus (Mouse).